The sequence spans 133 residues: uncharacterized protein (133 aa).

The segment at 107–133 (TSHHRAAGLQSQHAPGSGRVRITGGKV) is disordered.

This is an uncharacterized protein from Homo sapiens (Human).